A 147-amino-acid polypeptide reads, in one-letter code: Ubiquitin-conjugating enzyme E2 2 (147 aa).

Positions 1–147 (MALKRIQKEL…AREWTQKYAM (147 aa)) constitute a UBC core domain. Cys85 (glycyl thioester intermediate) is an active-site residue.

Belongs to the ubiquitin-conjugating enzyme family. As to quaternary structure, interacts with the brc-1-brd-1 heterodimer following ionizing irradiation. As to expression, expressed in the nervous system.

It is found in the nucleus. It localises to the chromosome. The protein resides in the cytoplasm. It catalyses the reaction S-ubiquitinyl-[E1 ubiquitin-activating enzyme]-L-cysteine + [E2 ubiquitin-conjugating enzyme]-L-cysteine = [E1 ubiquitin-activating enzyme]-L-cysteine + S-ubiquitinyl-[E2 ubiquitin-conjugating enzyme]-L-cysteine.. The protein operates within protein modification; protein ubiquitination. Catalyzes the covalent attachment of ubiquitin to other proteins. Mediates the selective degradation of short-lived and abnormal proteins. Plays a role in the DNA damage response. In particular, in response to ionizing radiation, associates with the E3 ubiquitin-protein ligase brc-1-brd-1 heterodimer on chromatin to activate E3-ubiquitin ligase activity of the heterodimer, and thus its DNA damage repair mechanisms. Required, cell autonomously, for death of the linker cell, a male-specific cell which guides the elongation of the gonad; perhaps acting as part of the ubiquitin proteasome system (UPS) and modulated by heat shock transcription factor hsf-1. The polypeptide is Ubiquitin-conjugating enzyme E2 2 (Caenorhabditis elegans).